Reading from the N-terminus, the 74-residue chain is ATP synthase subunit 9, mitochondrial (74 aa).

Transmembrane regions (helical) follow at residues 8–28 and 50–70; these read IGAG…GNVF and ILGF…AFLI.

Belongs to the ATPase C chain family. In terms of assembly, F-type ATPases have 2 components, CF(1) - the catalytic core - and CF(0) - the membrane proton channel. CF(1) has five subunits: alpha(3), beta(3), gamma(1), delta(1), epsilon(1). CF(0) has three main subunits: a, b and c.

Its subcellular location is the mitochondrion membrane. Its function is as follows. This protein is one of the chains of the nonenzymatic membrane component (F0) of mitochondrial ATPase. The polypeptide is ATP synthase subunit 9, mitochondrial (ATP9) (Triticum aestivum (Wheat)).